The primary structure comprises 495 residues: MDHYPIFLNLHGRHCVVIGGNETAARKGEDLLDSGAIITLIAPDLGGDCEDLLQRYPDRAHHRAEDYKPGMEQGAALVLSASGHDATDRLVYRQCTRLGIPVNTVDRPEYCSYITPAVVDRSPLQVAITSGGAAPVLARQVRSQIETLLPTAYGRLAALAGRLRERVAAVLPTGRQRLRFWEQVFDGPAAESMLAGREREAEQAMLELLRREQARRDERGEVYLVGAGPGDPDLLTFRALRLMQRADVVLYDHLAAPGLLRLVRKDAERIPVGKRRGQHTLPQEAINDKLIELAAAGKRVLRLKGGDPFIFGRGGEEIEGLIEHGIPFQVVPAVTAAQGAAAYAGIPLTHRDHAQSCRFLTGHRRHGALELGQWAPFRSDETLVVYMGLTHLETVSAQLQAGGLPPDQPAAAVDQATTPAQRVITAPLAELPERVRTARLQGPALIVVGATVTLQPQLGWYHSSPNAEPAFPEHGCLRGEPRPTRHPAPADTEQA.

A precorrin-2 dehydrogenase /sirohydrochlorin ferrochelatase region spans residues 1–205; the sequence is MDHYPIFLNL…GREREAEQAM (205 aa). NAD(+)-binding positions include 22 to 23 and 43 to 44; these read ET and PD. Phosphoserine is present on Ser130. Residues 220-495 are uroporphyrinogen-III C-methyltransferase; it reads GEVYLVGAGP…HPAPADTEQA (276 aa). An S-adenosyl-L-methionine-binding site is contributed by Pro229. Asp252 functions as the Proton acceptor in the catalytic mechanism. Lys274 functions as the Proton donor in the catalytic mechanism. S-adenosyl-L-methionine is bound by residues 305 to 307, Ile310, 335 to 336, Met387, and Ala416; these read GGD and TA. The interval 471–495 is disordered; the sequence is FPEHGCLRGEPRPTRHPAPADTEQA.

It in the N-terminal section; belongs to the precorrin-2 dehydrogenase / sirohydrochlorin ferrochelatase family. In the C-terminal section; belongs to the precorrin methyltransferase family.

It carries out the reaction uroporphyrinogen III + 2 S-adenosyl-L-methionine = precorrin-2 + 2 S-adenosyl-L-homocysteine + H(+). The catalysed reaction is precorrin-2 + NAD(+) = sirohydrochlorin + NADH + 2 H(+). The enzyme catalyses siroheme + 2 H(+) = sirohydrochlorin + Fe(2+). Its pathway is cofactor biosynthesis; adenosylcobalamin biosynthesis; precorrin-2 from uroporphyrinogen III: step 1/1. The protein operates within cofactor biosynthesis; adenosylcobalamin biosynthesis; sirohydrochlorin from precorrin-2: step 1/1. It participates in porphyrin-containing compound metabolism; siroheme biosynthesis; precorrin-2 from uroporphyrinogen III: step 1/1. It functions in the pathway porphyrin-containing compound metabolism; siroheme biosynthesis; siroheme from sirohydrochlorin: step 1/1. Its pathway is porphyrin-containing compound metabolism; siroheme biosynthesis; sirohydrochlorin from precorrin-2: step 1/1. In terms of biological role, multifunctional enzyme that catalyzes the SAM-dependent methylations of uroporphyrinogen III at position C-2 and C-7 to form precorrin-2 via precorrin-1. Then it catalyzes the NAD-dependent ring dehydrogenation of precorrin-2 to yield sirohydrochlorin. Finally, it catalyzes the ferrochelation of sirohydrochlorin to yield siroheme. The polypeptide is Siroheme synthase 2 (Halorhodospira halophila (strain DSM 244 / SL1) (Ectothiorhodospira halophila (strain DSM 244 / SL1))).